A 1381-amino-acid polypeptide reads, in one-letter code: DNA-directed RNA polymerase subunit beta'' (1381 aa).

Cys-224, Cys-295, Cys-302, and Cys-305 together coordinate Zn(2+).

The protein belongs to the RNA polymerase beta' chain family. RpoC2 subfamily. In plastids the minimal PEP RNA polymerase catalytic core is composed of four subunits: alpha, beta, beta', and beta''. When a (nuclear-encoded) sigma factor is associated with the core the holoenzyme is formed, which can initiate transcription. Zn(2+) serves as cofactor.

The protein resides in the plastid. It is found in the chloroplast. The enzyme catalyses RNA(n) + a ribonucleoside 5'-triphosphate = RNA(n+1) + diphosphate. Its function is as follows. DNA-dependent RNA polymerase catalyzes the transcription of DNA into RNA using the four ribonucleoside triphosphates as substrates. The sequence is that of DNA-directed RNA polymerase subunit beta'' from Guizotia abyssinica (Niger).